Here is a 285-residue protein sequence, read N- to C-terminus: MKGGDNMNNVLMAFLLTLLAGLATGIGSCIAFFAKKTNKKFLCVSLGFSAGVMIYVSMIEMFQTAKESLVGVMGIKAGNWITVISFFAGIAIIALIDKFVPEEENPHEVRSVEEVENEIEEYKGENKEGKADIKDKTLMRTGIVTALAIAIHNFPEGLATFVSALEGASLAIPITIAIAIHNIPEGISVSVPIFYATGDKKKAFLYSFLSGMSEPIGAIIGYTLLRNIFNDITLGILLSAVAGIMVFISLDELLPTARKYGEHHLAIYGLIAGMVVMAVSLLLFI.

A run of 3 helical transmembrane segments spans residues 13–33 (AFLL…IAFF), 41–61 (FLCV…MIEM), and 80–100 (WITV…DKFV). 2 residues coordinate Fe(2+): N153 and E156. E156 is a binding site for Zn(2+). Residues 160 to 180 (TFVSALEGASLAIPITIAIAI) traverse the membrane as a helical segment. H181 lines the Zn(2+) pocket. 3 residues coordinate Fe(2+): N182, E185, and E214. Position 185 (E185) interacts with Zn(2+). The next 3 helical transmembrane spans lie at 204–224 (FLYS…GYTL), 228–248 (IFND…MVFI), and 265–285 (LAIY…LLFI).

This sequence belongs to the ZIP transporter (TC 2.A.5) family. ZupT subfamily.

Its subcellular location is the cell membrane. It carries out the reaction Zn(2+)(in) = Zn(2+)(out). Mediates zinc uptake. May also transport other divalent cations. This Clostridium perfringens (strain 13 / Type A) protein is Zinc transporter ZupT.